A 356-amino-acid polypeptide reads, in one-letter code: Replication factor C subunit 3 (356 aa).

K20 bears the N6-acetyllysine mark. The residue at position 125 (S125) is a Phosphoserine.

Belongs to the activator 1 small subunits family. As to quaternary structure, subunit of the RFC complex, an heteropentameric complex consisting of a large subunit RFC1 and four small subunits RFC2, RFC3, RFC4 and RFC5; the RFC complex interacts with PCNA. Forms an heterotetrameric complex with RFC2, RFC4 and RFC5; this complex has ATPase activity but is not stimulated by PCNA. The heterotetramer of subunits RFC2, RFC3, RFC4 and RFC5 interacts with RAD17. Interacts with CNTD1; this interaction facilitates crossover formation.

It localises to the nucleus. In terms of biological role, subunit of the replication factor C (RFC) complex which acts during elongation of primed DNA templates by DNA polymerases delta and epsilon, and is necessary for ATP-dependent loading of proliferating cell nuclear antigen (PCNA) onto primed DNA. The protein is Replication factor C subunit 3 (RFC3) of Bos taurus (Bovine).